The chain runs to 726 residues: MEGAAVAEGLWGLADHHQKLGEIGKTIKCLEAICQSQISFLPLVEVKSRLRLAALLLRYSHNVNHAKSHLERSLLLLKSIPSSYDLKFQNYSLLSHCYHLLASFPPQRNLLVKALELASSVPQDISAYLWSCNFNSQLANTFIIQADFPSSLSALESGFLSASHICFPELQMFFTASMLHVHIMQWTDDYSVEKAVQRCDEIWQTISSDKTDRCPGLFFYNEMLHVFYRLRLCDYKNAQHHVDRLDQAMNAHSHKMQEIQQLLDELSSLNLSLSRYDLPSRERSALSARQSQLQDRVNALSPSSSTVNSLEPAYFGNIDRGWTEKLLLSPSPIDGEWLPKSAIDALVHLMVVISGRPKGLFKECSKRIESGLQIIQDELIKLGITDEVREADLRHTAIWMSRVFLMLQMQFLENRVALELTRSDYVEAEEALVDMKNWFTRFPTILQASECMIEMLRGQYSHSVGCYSEAAFHCIEATKLTESISMQASCQAFAAVSYLTIGDAESSSKALDLIGPLNGMTNSLSGVREEASILFAYGLLLMKQRDLQEARNRLAKGLQIAHNHMGNLQLVAQYLTLLGNLALSLHDTVQAREILRSSLTLAKKLYDIPTQLWVLSIFTALYQQLGEKGNEMENEEFRKKKWDELQSRLAEARGSIHHIELVAKARIELYQIDNNPQEQSLVASAQSMQGNLDIPESVGIEGPSPAPSSSRLVGLDTGKRWGKRRM.

TPR repeat units follow at residues A7–F40, F88–V121, C132–I165, R229–L262, P443–A477, A531–H564, and A572–L605. Residues S697 to M726 are disordered.

The protein belongs to the SCC4/mau-2 family. Interacts with SCC2 to form the cohesin loading complex. As to expression, expressed ubiquitously.

It localises to the nucleus. The protein localises to the cytoplasm. Functionally, essential protein required for cell fate determination during embryogenesis. Involved in sister chromatid cohesion. Forms a complex with SCC2, which is required for the association of the cohesin complex with chromosomes. The polypeptide is Sister chromatid cohesion protein SCC4 (Arabidopsis thaliana (Mouse-ear cress)).